The primary structure comprises 816 residues: Acyl-homoserine lactone acylase QuiP (816 aa).

The first 33 residues, 1-33 (MASPALSHFLPRFGVAAAVAGVLSLTGCQTWNA), serve as a signal peptide directing secretion. Serine 262 serves as the catalytic Nucleophile.

This sequence belongs to the peptidase S45 family. In terms of assembly, heterodimer of an alpha subunit and a beta subunit processed from the same precursor.

The protein resides in the periplasm. It catalyses the reaction an N-acyl-L-homoserine lactone + H2O = L-homoserine lactone + a carboxylate. Its function is as follows. Catalyzes the deacylation of acyl-homoserine lactone (AHL or acyl-HSL), releasing homoserine lactone (HSL) and the corresponding fatty acid. Possesses a specificity for the degradation of long-chain acyl-HSLs (side chains of seven or more carbons in length). In Pseudomonas fluorescens (strain Pf0-1), this protein is Acyl-homoserine lactone acylase QuiP (quiP).